We begin with the raw amino-acid sequence, 423 residues long: MIKLDIKDAKKFLKTNVFSLQDQVNELHDVIQNKSGLGNDFLGWLDLPLTYDKEELDRIYKLKEQHKNVDAIVVIGIGGSYLGAKAGYEFLKTPFKKQKPELIFAGHHLSANYLKHLLKYLNKKNYVINVISKSGTTTEPAVAFRLLKAHIENKYGVKEARKRIFATTDKARGSLYQLAINEGYERFVIEDNVGGRFSVLSAVGLLPFVFVGIDVEKMIKGAQDAYHDAQDPSLKKNKAYLYAVTRFLLNQSGKDVEYLINYEPRLAFFAEWWKQLFGESEGKGGKGLLVHSASFTTDLHSLGQQIQDGNRIIFETVLNVKKTDKLSIPFVEEDLDKLNYIAGKEISYVNEQAFLGTKEAHIDGGVPNIVITIDKMDAYHFGYLVYFFEIACAMSAYLLEVNPFDQPGVEAYKKNMFRLLGKK.

The Proton donor role is filled by Glu279. Active-site residues include His300 and Lys413.

Belongs to the GPI family.

It localises to the cytoplasm. The catalysed reaction is alpha-D-glucose 6-phosphate = beta-D-fructose 6-phosphate. Its pathway is carbohydrate biosynthesis; gluconeogenesis. It functions in the pathway carbohydrate degradation; glycolysis; D-glyceraldehyde 3-phosphate and glycerone phosphate from D-glucose: step 2/4. Functionally, catalyzes the reversible isomerization of glucose-6-phosphate to fructose-6-phosphate. This is Glucose-6-phosphate isomerase from Acholeplasma laidlawii (strain PG-8A).